Consider the following 670-residue polypeptide: Solute carrier organic anion transporter family member 1A4 (670 aa).

Residues Met-1–Lys-20 lie on the Cytoplasmic side of the membrane. The chain crosses the membrane as a helical span at residues Ala-21–Met-40. At Asn-41–Gly-59 the chain is on the extracellular side. Residues Leu-60–Gly-80 form a helical membrane-spanning segment. Over Thr-81–Pro-86 the chain is Cytoplasmic. Residues Ile-87–Gly-111 traverse the membrane as a helical segment. The Extracellular portion of the chain corresponds to Arg-112–Ser-155. N-linked (GlcNAc...) asparagine glycans are attached at residues Asn-124 and Asn-135. The helical transmembrane segment at Leu-156 to Glu-184 threads the bilayer. Topologically, residues Asp-185–Met-203 are cytoplasmic. Residues Thr-204–Thr-224 form a helical membrane-spanning segment. Residues Gly-225 to Val-242 lie on the Extracellular side of the membrane. Residues Gly-243 to Pro-267 form a helical membrane-spanning segment. Residues Lys-268–Ser-311 are Cytoplasmic-facing. A helical transmembrane segment spans residues Leu-312–Ile-333. Topologically, residues Asn-334–Glu-353 are extracellular. Residues Ile-354–Met-377 form a helical membrane-spanning segment. The Cytoplasmic portion of the chain corresponds to Lys-378–Lys-381. The chain crosses the membrane as a helical span at residues Ile-382–Ser-405. The Extracellular portion of the chain corresponds to Tyr-406–Phe-513. Positions Asn-433–Gln-488 constitute a Kazal-like domain. Disulfide bonds link Cys-439-Cys-469, Cys-445-Cys-465, and Cys-454-Cys-486. N-linked (GlcNAc...) asparagine glycans are attached at residues Asn-483 and Asn-492. Residues Leu-514–Leu-536 form a helical membrane-spanning segment. At Arg-537–Ser-545 the chain is on the cytoplasmic side. Residues Leu-546–Ile-571 form a helical membrane-spanning segment. Over Asp-572–Pro-605 the chain is Extracellular. The helical transmembrane segment at Ala-606–Met-623 threads the bilayer. Residues Arg-624–Leu-670 lie on the Cytoplasmic side of the membrane. 2 positions are modified to phosphoserine: Ser-634 and Ser-635. Residues Ser-649–Leu-670 form a disordered region. Polar residues predominate over residues Cys-651–Asn-662.

This sequence belongs to the organo anion transporter (TC 2.A.60) family. In terms of tissue distribution, highly expressed in brain and liver. Detected at very low levels in heart and lung.

It is found in the cell membrane. It catalyses the reaction estrone 3-sulfate(out) = estrone 3-sulfate(in). It carries out the reaction taurocholate(out) = taurocholate(in). The catalysed reaction is prostaglandin E2(out) = prostaglandin E2(in). The enzyme catalyses L-thyroxine(out) = L-thyroxine(in). Functionally, mediates the Na(+)-independent transport of organic anions such as taurocholate, cholate, 17-beta-glucuronosyl estradiol, prostaglandin E2, estrone 3-sulfate, L-thyroxine (T4), the cardiac glycosides ouabain and digoxin and thyroid hormones. Shows a pH-sensitive substrate specificity which may be ascribed to the protonation state of the binding site and leads to a stimulation of substrate transport in an acidic microenvironment. Hydrogencarbonate/HCO3(-) acts as the probable counteranion that exchanges for organic anions. This Mus musculus (Mouse) protein is Solute carrier organic anion transporter family member 1A4 (Slco1a4).